Consider the following 193-residue polypeptide: NADH-quinone oxidoreductase subunit B (193 aa).

Residues Cys-72, Cys-73, Cys-137, and Cys-167 each contribute to the [4Fe-4S] cluster site.

The protein belongs to the complex I 20 kDa subunit family. NDH-1 is composed of 14 different subunits. Subunits NuoB, C, D, E, F, and G constitute the peripheral sector of the complex. Requires [4Fe-4S] cluster as cofactor.

It is found in the cell inner membrane. The enzyme catalyses a quinone + NADH + 5 H(+)(in) = a quinol + NAD(+) + 4 H(+)(out). In terms of biological role, NDH-1 shuttles electrons from NADH, via FMN and iron-sulfur (Fe-S) centers, to quinones in the respiratory chain. The immediate electron acceptor for the enzyme in this species is believed to be ubiquinone. Couples the redox reaction to proton translocation (for every two electrons transferred, four hydrogen ions are translocated across the cytoplasmic membrane), and thus conserves the redox energy in a proton gradient. The polypeptide is NADH-quinone oxidoreductase subunit B (Bradyrhizobium sp. (strain ORS 278)).